A 598-amino-acid polypeptide reads, in one-letter code: MALRCPIVSVLGHVDHGKTSLLDKIRRTRVTQREAGGITQHIGASEIPINTIKKVSKDLLGLFKADLSIPGILVIDTPGHEAFTSLRKRGGALADIAILVVDINEGFKPQTIEAINILKQCKTPFVVAANKVDRIPGWNSSEGPFILNFNEKNQHPNAMTEFEIRLYENVIKHLNELGFDADLFSRVKDTTKTINVVPVSAMTGEGVPDLLVIISGLAQRFLEQKLALNVEGYAKGTVLELKEEKGLGKTIDAIIYDGIAKTGDFLVVGNPDGVLVSKIKALLKPKELDEMRDPKDKFKPSKQISAATGVKISAPDLDSVIAGSPLRIVPKNQVEAAKEEVLEEVEEFTILTDDEGIIIKADTMGSLEALANELRKVNAKIKKAEVGDISKKDVIEASSYASTNPLNGLIISFNTKVLADAKAEIEKSDVKLLEGKIIYKLVEEHEEWTKEMEELMKSDEINRLTKPAMIKILPNCIFRQKEPAVCGVEVLYGTLKIGSPIMSEDGKKLGYVKEMRDNQQENIKEAKVGMQVPVSIDGNIVLGRNAKENDILYVEVPEPEARKLHHEFKDELRGDEKEALSRYMELKQKIENNIFWGM.

The tr-type G domain maps to 3–225 (LRCPIVSVLG…GLAQRFLEQK (223 aa)). The interval 12 to 19 (GHVDHGKT) is G1. GTP is bound at residue 12-19 (GHVDHGKT). The segment at 37 to 41 (GITQH) is G2. The tract at residues 76–79 (DTPG) is G3. Residues 76–80 (DTPGH) and 130–133 (NKVD) contribute to the GTP site. A G4 region spans residues 130–133 (NKVD). Positions 200–202 (SAM) are G5.

It belongs to the TRAFAC class translation factor GTPase superfamily. Classic translation factor GTPase family. IF-2 subfamily.

Function in general translation initiation by promoting the binding of the formylmethionine-tRNA to ribosomes. Seems to function along with eIF-2. This chain is Probable translation initiation factor IF-2, found in Methanococcus maripaludis (strain DSM 14266 / JCM 13030 / NBRC 101832 / S2 / LL).